The sequence spans 385 residues: Leucine aminopeptidase 1 (385 aa).

Residues 1–20 (MKLPSLLSLGVAASTTIVAA) form the signal peptide. The propeptide occupies 21-87 (VPDQKPIGDT…FPKTFAQTTV (67 aa)). N-linked (GlcNAc...) asparagine glycosylation occurs at Asn-177. The Zn(2+) site is built by His-185, Asp-204, Glu-243, and Asp-270. Residues Cys-319 and Cys-323 are joined by a disulfide bond. His-352 contributes to the Zn(2+) binding site.

The protein belongs to the peptidase M28 family. M28E subfamily. Monomer. It depends on Zn(2+) as a cofactor.

The protein resides in the secreted. Functionally, extracellular aminopeptidase that allows assimilation of proteinaceous substrates. The polypeptide is Leucine aminopeptidase 1 (LAP1) (Ajellomyces capsulatus (strain NAm1 / WU24) (Darling's disease fungus)).